The following is a 160-amino-acid chain: Phosphopantetheine adenylyltransferase (160 aa).

T10 provides a ligand contact to substrate. ATP-binding positions include 10–11 (TF) and H18. Residues K42, L74, and R88 each coordinate substrate. Residues 89–91 (GLR), E99, and 124–130 (NSFISST) contribute to the ATP site.

This sequence belongs to the bacterial CoaD family. As to quaternary structure, homohexamer. Mg(2+) serves as cofactor.

It localises to the cytoplasm. The enzyme catalyses (R)-4'-phosphopantetheine + ATP + H(+) = 3'-dephospho-CoA + diphosphate. It functions in the pathway cofactor biosynthesis; coenzyme A biosynthesis; CoA from (R)-pantothenate: step 4/5. Its function is as follows. Reversibly transfers an adenylyl group from ATP to 4'-phosphopantetheine, yielding dephospho-CoA (dPCoA) and pyrophosphate. This chain is Phosphopantetheine adenylyltransferase, found in Photobacterium damsela subsp. piscicida (Pasteurella piscicida).